The chain runs to 339 residues: Protein FAM50A (339 aa).

Positions 1–31 (MAQYKGAASEAGRAMHLMKKREKQREQMEQM) are disordered. Ala2 is subject to N-acetylalanine. A Glycyl lysine isopeptide (Lys-Gly) (interchain with G-Cter in SUMO2) cross-link involves residue Lys100. Positions 121 to 177 (SFTLEEEEEGGEEEEEAAMYEEEMEREEITTKKRKLGKNPDVDTSFLPDRDREEEEN) are disordered. Acidic residues predominate over residues 124-146 (LEEEEEGGEEEEEAAMYEEEMER). Residues 152–155 (KKRK) carry the Nuclear localization signal motif. The segment covering 168-177 (PDRDREEEEN) has biased composition (basic and acidic residues).

The protein belongs to the FAM50 family. As to quaternary structure, interacts with EFTUD2, a component of the spliceosome U5 complex. Interacts with DDX41, a component of the spliceosome C complex. In terms of tissue distribution, widely expressed in fetal and adult tissues. Mostly abundant in fetal brain, liver and kidney; in the adult, high levels were also observed in heart, skeletal muscle, spleen, thymus, prostate and small intestine. Expressed in fetal cerebellum and hypothalamus. Low expression is observed in fetal temporal lobe.

The protein resides in the nucleus. Its function is as follows. Probably involved in the regulation of pre-mRNA splicing. The sequence is that of Protein FAM50A (FAM50A) from Homo sapiens (Human).